The primary structure comprises 396 residues: MVLLSFSLRFIAFTLTITLTQIADGFQSRMLMNNGLALSPQMGWNSWNHFQCNINETLIKQTADAMVSSGLSAIGYKYINIDDCWGELKRDSQGSLVAKASTFPSGIKALSDYVHSKGLKLGIYSDAGTLTCSQTMPGSLGHEEQDAKTFASWGIDYLKYDNCENTGTSPRERYPKMSKALLNSGRSIFFSLCEWGQEDPATWAGDIGNSWRTTGDIQDNWKSMTLIADQNDRWASYARPGSWNDPDMLEVGNGGMTKEEYMSHFSIWALAKAPLLIGCDLRSMDKVTFELLSNKEVIAVNQDKLGIQGKKVKKEGDLEVWAGPLSKKRVAVILWNRGSASANITARWAEIGLNSSDIVNARDLWEHSTYSCVKKQLSALVEPHACKMYTLTRRKA.

The signal sequence occupies residues M1–G25. 2 disulfides stabilise this stretch: C52–C84 and C132–C163. The N-linked (GlcNAc...) asparagine glycan is linked to N55. Substrate is bound by residues D82–D83 and K159. D161 functions as the Nucleophile in the catalytic mechanism. Substrate-binding positions include E194–E198, R212, and D216. D216 functions as the Proton donor in the catalytic mechanism. 2 N-linked (GlcNAc...) asparagine glycosylation sites follow: N343 and N354.

It belongs to the glycosyl hydrolase 27 family. Homodimer.

It is found in the secreted. Its subcellular location is the cell wall. The protein resides in the extracellular space. The protein localises to the apoplast. The catalysed reaction is Hydrolysis of terminal, non-reducing alpha-D-galactose residues in alpha-D-galactosides, including galactose oligosaccharides, galactomannans and galactolipids.. In terms of biological role, may regulate leaf (and possibly other organ) development by functioning in cell wall loosening and cell wall expansion. The polypeptide is Alpha-galactosidase 2 (Arabidopsis thaliana (Mouse-ear cress)).